Here is a 252-residue protein sequence, read N- to C-terminus: Tabinhibitin 9 (252 aa).

Residues Met1–Ser23 form the signal peptide. Residues Arg32–Asp34 carry the Cell attachment site motif. Residues Tyr63 to Phe207 form the SCP domain.

It belongs to the CRISP family. In terms of tissue distribution, expressed in salivary glands.

It localises to the secreted. Functionally, inhibits platelet aggregation induced by all agonists tested (ADP, arachidonic acid, the thromboxane A2 analog U46619, thrombin, and snake venom snaclecs (TMVA that activates platelet through GPIB, and stejnulxin that specifically acts through GPVI (GP6))). May act by competing with fibrinogen for binding to glycoprotein IIb/IIIa (ITGA2B/ITGB3). The protein is Tabinhibitin 9 of Tabanus yao (Horsefly).